Consider the following 520-residue polypeptide: Transactivator/viroplasmin protein (520 aa).

Disordered regions lie at residues 32 to 51 and 487 to 520; these read GSSQQGELSLHRETPEKEEA and QDASTDSGPKDGPPPTRSIVEKEDVPTTSSKQVD. Basic and acidic residues predominate over residues 40-51; sequence SLHRETPEKEEA.

Belongs to the caulimoviridae viroplasmin family.

The protein localises to the host cytoplasm. Functionally, enhances the ribosomal termination-reinitiation event leading to the translation of major open reading frames on the polycistronic viral RNAs. The sequence is that of Transactivator/viroplasmin protein from Arabidopsis thaliana (Mouse-ear cress).